The following is a 264-amino-acid chain: S-adenosylmethionine decarboxylase proenzyme (264 aa).

Ser112 (schiff-base intermediate with substrate; via pyruvic acid) is an active-site residue. Pyruvic acid (Ser); by autocatalysis is present on Ser112. His117 functions as the Proton acceptor; for processing activity in the catalytic mechanism. Cys140 serves as the catalytic Proton donor; for catalytic activity.

This sequence belongs to the prokaryotic AdoMetDC family. Type 2 subfamily. As to quaternary structure, heterooctamer of four alpha and four beta chains arranged as a tetramer of alpha/beta heterodimers. Pyruvate serves as cofactor. In terms of processing, is synthesized initially as an inactive proenzyme. Formation of the active enzyme involves a self-maturation process in which the active site pyruvoyl group is generated from an internal serine residue via an autocatalytic post-translational modification. Two non-identical subunits are generated from the proenzyme in this reaction, and the pyruvate is formed at the N-terminus of the alpha chain, which is derived from the carboxyl end of the proenzyme. The post-translation cleavage follows an unusual pathway, termed non-hydrolytic serinolysis, in which the side chain hydroxyl group of the serine supplies its oxygen atom to form the C-terminus of the beta chain, while the remainder of the serine residue undergoes an oxidative deamination to produce ammonia and the pyruvoyl group blocking the N-terminus of the alpha chain.

It catalyses the reaction S-adenosyl-L-methionine + H(+) = S-adenosyl 3-(methylsulfanyl)propylamine + CO2. Its pathway is amine and polyamine biosynthesis; S-adenosylmethioninamine biosynthesis; S-adenosylmethioninamine from S-adenosyl-L-methionine: step 1/1. Catalyzes the decarboxylation of S-adenosylmethionine to S-adenosylmethioninamine (dcAdoMet), the propylamine donor required for the synthesis of the polyamines spermine and spermidine from the diamine putrescine. The chain is S-adenosylmethionine decarboxylase proenzyme from Enterobacter sp. (strain 638).